Reading from the N-terminus, the 199-residue chain is Probable nicotinate-nucleotide adenylyltransferase (199 aa).

This sequence belongs to the NadD family.

The catalysed reaction is nicotinate beta-D-ribonucleotide + ATP + H(+) = deamido-NAD(+) + diphosphate. Its pathway is cofactor biosynthesis; NAD(+) biosynthesis; deamido-NAD(+) from nicotinate D-ribonucleotide: step 1/1. In terms of biological role, catalyzes the reversible adenylation of nicotinate mononucleotide (NaMN) to nicotinic acid adenine dinucleotide (NaAD). The sequence is that of Probable nicotinate-nucleotide adenylyltransferase from Leptospira interrogans serogroup Icterohaemorrhagiae serovar copenhageni (strain Fiocruz L1-130).